Here is a 130-residue protein sequence, read N- to C-terminus: uncharacterized protein (130 aa).

This is an uncharacterized protein from Pyrococcus horikoshii (strain ATCC 700860 / DSM 12428 / JCM 9974 / NBRC 100139 / OT-3).